The sequence spans 3365 residues: Probable serine/threonine-protein kinase roco9 (3365 aa).

5 disordered regions span residues 1 to 177 (MTSI…KSSK), 397 to 497 (ESTE…QPPQ), 944 to 985 (PIKK…GFLS), 1044 to 1098 (IHQQ…NNKI), and 1261 to 1301 (QNNL…ISKG). The segment covering 8-27 (FDKKSKRSNEDTGEKEETKK) has biased composition (basic and acidic residues). Composition is skewed to low complexity over residues 51–84 (LQQLQQQQDDEQQQQQQQFMEGDNNNNNTNSLNT), 100–116 (STNSTSYSSLRSSSTRS), 137–169 (SQTSESSDITSTSTTSPTMSAASSSSSSGTVKT), and 397–415 (ESTEVLTLSLSSSTSTLEP). Residues 243–437 (TPLYSLIKRQ…RLPQQSSDDN (195 aa)) enclose the Rho-GAP domain. The segment covering 421 to 434 (PLSTSTQRLPQQSS) has biased composition (polar residues). Composition is skewed to low complexity over residues 435 to 445 (DDNSNNDNNNK), 457 to 489 (NNDNNNINNDNGEIIPPSIQVTPPTSPQTQPKQ), 959 to 974 (SSPLSSLRSSKGIPSK), 1044 to 1096 (IHQQ…NNNN), and 1262 to 1301 (NNLNNNNGNKENSSSSSSSSSSTSTTPSITKKSSGSISKG). Positions 804-1484 (IWDIYSPLIE…DQIILWSSFF (681 aa)) constitute a Myotubularin phosphatase domain. LRR repeat units lie at residues 1510–1526 (SQKLTFLSIDRNLLSYF), 1527–1549 (STLTKLNLSRNYFNTFPIEIILL), 1550–1572 (SNLTHLWLQDNRIKSIPSSLLKL), 1576–1599 (KLKLQEFDLSHNLLESLHKSIYTL), 1600–1622 (STLTKLVLDNNKLIIIPESISKM), 1624–1645 (QLKCLSVQNNRLSSFPQALSLC), 1646–1668 (VGLEELYVQNNQIRELPLGFFKL), 1670–1691 (SLRMLDLRNNQITKFKCHKLDD), 1697–1720 (MNEIIHFRMGPNPLQKLSNQMFEM), 1722–1743 (SLIHLELTGCSLSTVPLKLLDN), 1744–1770 (LVNLEALYLNQNKLSEISIDFKRLFKL), 1772–1789 (VLDLSDNQFTNVPIHAML), 1790–1812 (PSLKKLYLHNNQLYNISFNDFNL), 1814–1835 (LLSELRLDGNKLTYVSPSIGTK), 1837–1861 (LSLTLLNLDRNPQITTLPHTLALLK), and 1863–1887 (LKSLIVNSNIMESPFRELETTDAIL). Positions 1932–1947 (SKEREKEKEKEKEKEK) are enriched in basic and acidic residues. Disordered regions lie at residues 1932-1963 (SKEREKEKEKEKEKEKEKKHKNIGYGSKDKDK), 2190-2389 (NNNN…NNGS), 2507-2567 (APST…LQTP), and 2674-2704 (SNQQQQQQQQSSTQHQHQHHHHQQQQQTSIN). Composition is skewed to low complexity over residues 2190 to 2205 (NNNNNNNNNNNNNNNN), 2216 to 2389 (SINN…NNGS), 2522 to 2567 (NNTS…LQTP), and 2676 to 2688 (QQQQQQQQSSTQH). One can recognise a Protein kinase domain in the interval 3008–3269 (ELDPNPIGEG…KKLEEIELIL (262 aa)). Residues 3014–3022 (IGEGGTATV) and Lys-3035 each bind ATP. Asp-3132 acts as the Proton acceptor in catalysis. Over residues 3311–3333 (QQQKQQQLQQQKQSPKQLQQQKP) the composition is skewed to low complexity. The disordered stretch occupies residues 3311–3365 (QQQKQQQLQQQKQSPKQLQQQKPLPTPPKQLSNNDSTPTKPLDDSSDSSSEDSNN). The segment covering 3354–3365 (DSSDSSSEDSNN) has biased composition (acidic residues).

It belongs to the protein kinase superfamily. TKL Ser/Thr protein kinase family. ROCO subfamily.

It catalyses the reaction L-seryl-[protein] + ATP = O-phospho-L-seryl-[protein] + ADP + H(+). It carries out the reaction L-threonyl-[protein] + ATP = O-phospho-L-threonyl-[protein] + ADP + H(+). In Dictyostelium discoideum (Social amoeba), this protein is Probable serine/threonine-protein kinase roco9 (roco9).